We begin with the raw amino-acid sequence, 447 residues long: Asparagine--tRNA ligase (447 aa).

Belongs to the class-II aminoacyl-tRNA synthetase family. In terms of assembly, homodimer.

Its subcellular location is the cytoplasm. It carries out the reaction tRNA(Asn) + L-asparagine + ATP = L-asparaginyl-tRNA(Asn) + AMP + diphosphate + H(+). This chain is Asparagine--tRNA ligase, found in Lactococcus lactis subsp. cremoris (strain MG1363).